Consider the following 429-residue polypeptide: Gap junction gamma-2 protein (429 aa).

Over 1 to 25 the chain is Cytoplasmic; the sequence is MTNMSWSFLTRLLEEIHNHSTFVGK. Residues 26–46 traverse the membrane as a helical segment; it reads VWLTVLVVFRIVLTAVGGESI. The Extracellular segment spans residues 47–78; the sequence is YSDEQTKFTCNTRQPGCDNVCYDAFAPLSHVR. A helical membrane pass occupies residues 79 to 99; sequence FWVFQIVVISTPSVMYLGYAV. Residues 100–214 lie on the Cytoplasmic side of the membrane; the sequence is HRLARASQDE…EGLMRVYVAQ (115 aa). A disordered region spans residues 106–200; that stretch reads SQDERRRASR…GPAGQHDGRR (95 aa). Over residues 112 to 123 the composition is skewed to basic residues; that stretch reads RASRRRPSRRAP. Pro residues predominate over residues 124–138; that stretch reads RPPLPLPPPPHPGWP. Over residues 142–173 the composition is skewed to acidic residues; it reads DLGEEEPMLGLGEEDEDPGVAEGLGEDEEAED. Residues 215–235 form a helical membrane-spanning segment; that stretch reads LVARAAFEVAFLVGQYLLYGF. The Extracellular segment spans residues 236–263; the sequence is EVRPFFACSRQPCPHVVDCFVSRPTEKT. Residues 264 to 284 traverse the membrane as a helical segment; that stretch reads VFLLVMYVVSCLCLLLNLCEM. Topologically, residues 285 to 429 are cytoplasmic; that stretch reads AHLGLGNAQD…SREGKTTVWI (145 aa). 2 disordered regions span residues 296–316 and 361–429; these read VRGRRPLPASPGPMPRPPPCA and LGDL…TVWI. Residues 303-316 show a composition bias toward pro residues; that stretch reads PASPGPMPRPPPCA. The residue at position 366 (S366) is a Phosphoserine. Residues 372–395 show a composition bias toward low complexity; the sequence is LPANARGPPKPGAPASGSGSATSG.

This sequence belongs to the connexin family. Gamma-type subfamily. As to quaternary structure, a connexon is composed of a hexamer of connexins. Interacts with TJP1.

The protein localises to the cell membrane. It is found in the cell junction. Its subcellular location is the gap junction. In terms of biological role, one gap junction consists of a cluster of closely packed pairs of transmembrane channels, the connexons, through which materials of low MW diffuse from one cell to a neighboring cell. May play a role in myelination in central and peripheral nervous systems. The polypeptide is Gap junction gamma-2 protein (GJC2) (Bos taurus (Bovine)).